The primary structure comprises 175 residues: Transcriptional regulator GadE (175 aa).

In terms of domain architecture, HTH luxR-type spans 109 to 174 (HKNSQLCFSH…DIVTLGITSY (66 aa)). The segment at residues 133–152 (ESNITSTLNISQQTLKIQKF) is a DNA-binding region (H-T-H motif).

Functionally, regulates the expression of several genes involved in acid resistance. Required for the expression of gadA and gadBC, among others, regardless of media or growth conditions. Binds directly to the 20 bp GAD box found in the control regions of both loci. Could be involved in the regulation of the genes coding for the type III secretion system in enterohaemorragic strains. In Escherichia coli O157:H7, this protein is Transcriptional regulator GadE (gadE).